The sequence spans 470 residues: Uronate isomerase (470 aa).

It belongs to the metallo-dependent hydrolases superfamily. Uronate isomerase family.

The catalysed reaction is D-glucuronate = D-fructuronate. It catalyses the reaction aldehydo-D-galacturonate = keto-D-tagaturonate. Its pathway is carbohydrate metabolism; pentose and glucuronate interconversion. The protein is Uronate isomerase of Klebsiella pneumoniae (strain 342).